A 372-amino-acid chain; its full sequence is Cyclin-dependent kinase 9 (372 aa).

In terms of domain architecture, Protein kinase spans 19-315 (YEKLAKIGQG…SDDALNHDFF (297 aa)). ATP contacts are provided by residues 25–33 (IGQGTFGEV) and Lys-48. Asp-149 (proton acceptor) is an active-site residue. The disordered stretch occupies residues 341–372 (PPRRRGGHMPQQPANQGRNPAATNQTEFDRVF). Residues 352 to 366 (QPANQGRNPAATNQT) are compositionally biased toward polar residues.

It belongs to the protein kinase superfamily. CMGC Ser/Thr protein kinase family. CDC2/CDKX subfamily. In terms of assembly, associates with cyclin-T to form P-TEFb. Also associates with cyclin-K.

Its subcellular location is the nucleus. It catalyses the reaction L-seryl-[protein] + ATP = O-phospho-L-seryl-[protein] + ADP + H(+). The catalysed reaction is L-threonyl-[protein] + ATP = O-phospho-L-threonyl-[protein] + ADP + H(+). The enzyme catalyses [DNA-directed RNA polymerase] + ATP = phospho-[DNA-directed RNA polymerase] + ADP + H(+). In terms of biological role, member of the cyclin-dependent kinase pair (CDK9/cyclin-T) complex, also called positive transcription elongation factor b (P-TEFb), which facilitates the transition from abortive to production elongation by phosphorylating the CTD (C-terminal domain) of the large subunit of RNA polymerase II (RNAP II), SUPT5H and RDBP. The CDK9/cyclin-K complex also has a kinase activity toward CTD of RNAP II and can substitute for P-TEFb in vitro. The protein is Cyclin-dependent kinase 9 (CDK9) of Gallus gallus (Chicken).